The chain runs to 190 residues: ATP synthase subunit b (190 aa).

The chain crosses the membrane as a helical span at residues 34–54; that stretch reads LDIFETNLINLAILVGILFYF.

It belongs to the ATPase B chain family. F-type ATPases have 2 components, F(1) - the catalytic core - and F(0) - the membrane proton channel. F(1) has five subunits: alpha(3), beta(3), gamma(1), delta(1), epsilon(1). F(0) has four main subunits: a(1), b(1), b'(1) and c(10-14). The alpha and beta chains form an alternating ring which encloses part of the gamma chain. F(1) is attached to F(0) by a central stalk formed by the gamma and epsilon chains, while a peripheral stalk is formed by the delta, b and b' chains.

The protein resides in the cellular thylakoid membrane. In terms of biological role, f(1)F(0) ATP synthase produces ATP from ADP in the presence of a proton or sodium gradient. F-type ATPases consist of two structural domains, F(1) containing the extramembraneous catalytic core and F(0) containing the membrane proton channel, linked together by a central stalk and a peripheral stalk. During catalysis, ATP synthesis in the catalytic domain of F(1) is coupled via a rotary mechanism of the central stalk subunits to proton translocation. Component of the F(0) channel, it forms part of the peripheral stalk, linking F(1) to F(0). This chain is ATP synthase subunit b, found in Nostoc punctiforme (strain ATCC 29133 / PCC 73102).